A 231-amino-acid polypeptide reads, in one-letter code: Large ribosomal subunit protein uL1 (231 aa).

It belongs to the universal ribosomal protein uL1 family. Part of the 50S ribosomal subunit.

Binds directly to 23S rRNA. The L1 stalk is quite mobile in the ribosome, and is involved in E site tRNA release. Functionally, protein L1 is also a translational repressor protein, it controls the translation of the L11 operon by binding to its mRNA. The protein is Large ribosomal subunit protein uL1 of Beijerinckia indica subsp. indica (strain ATCC 9039 / DSM 1715 / NCIMB 8712).